The following is a 722-amino-acid chain: Glycine--tRNA ligase beta subunit (722 aa).

The protein belongs to the class-II aminoacyl-tRNA synthetase family. Tetramer of two alpha and two beta subunits.

It is found in the cytoplasm. The catalysed reaction is tRNA(Gly) + glycine + ATP = glycyl-tRNA(Gly) + AMP + diphosphate. This chain is Glycine--tRNA ligase beta subunit, found in Xylella fastidiosa (strain Temecula1 / ATCC 700964).